The following is a 461-amino-acid chain: Homogentisate 1,2-dioxygenase (461 aa).

Positions 341, 347, and 377 each coordinate Fe cation.

This sequence belongs to the homogentisate dioxygenase family. Fe cation serves as cofactor.

The enzyme catalyses homogentisate + O2 = 4-maleylacetoacetate + H(+). Its pathway is amino-acid degradation; L-phenylalanine degradation; acetoacetate and fumarate from L-phenylalanine: step 4/6. The protein is Homogentisate 1,2-dioxygenase (HGO) of Arabidopsis thaliana (Mouse-ear cress).